A 219-amino-acid chain; its full sequence is Cytidylate kinase (219 aa).

ATP is bound at residue Gly-15–Thr-23.

The protein belongs to the cytidylate kinase family. Type 1 subfamily.

The protein localises to the cytoplasm. The enzyme catalyses CMP + ATP = CDP + ADP. It catalyses the reaction dCMP + ATP = dCDP + ADP. The protein is Cytidylate kinase of Brucella abortus (strain S19).